The sequence spans 295 residues: Elongation factor Ts (295 aa).

The involved in Mg(2+) ion dislocation from EF-Tu stretch occupies residues 79 to 82 (TDFV).

The protein belongs to the EF-Ts family.

It localises to the cytoplasm. In terms of biological role, associates with the EF-Tu.GDP complex and induces the exchange of GDP to GTP. It remains bound to the aminoacyl-tRNA.EF-Tu.GTP complex up to the GTP hydrolysis stage on the ribosome. This is Elongation factor Ts from Bacillus cereus (strain B4264).